Reading from the N-terminus, the 223-residue chain is UPF0758 protein Tgr7_0100 (223 aa).

The 122-residue stretch at 102-223 folds into the MPN domain; sequence ALTSPDDTRR…LVSFAERGLL (122 aa). Zn(2+)-binding residues include histidine 173, histidine 175, and aspartate 186. Positions 173–186 match the JAMM motif motif; the sequence is HNHPSGVAEPSRSD.

It belongs to the UPF0758 family.

The chain is UPF0758 protein Tgr7_0100 from Thioalkalivibrio sulfidiphilus (strain HL-EbGR7).